A 179-amino-acid chain; its full sequence is MAEQTTLARPYAKAVFELTKDAKTRNTWSKRLQALGTVAADDQVAALVGNPRVSREQLIGLLLDAVGEDTLGQEGKNLVQLLADNGRLGLLPEIAALYEHLRAEAEGVVDVQVTSASKLTKEQQDQIAGALKKRLGRKVRLHCRTDEALIGGALIQAGDLTIDGSVRGKLARLSSAMAH.

Belongs to the ATPase delta chain family. As to quaternary structure, F-type ATPases have 2 components, F(1) - the catalytic core - and F(0) - the membrane proton channel. F(1) has five subunits: alpha(3), beta(3), gamma(1), delta(1), epsilon(1). F(0) has three main subunits: a(1), b(2) and c(10-14). The alpha and beta chains form an alternating ring which encloses part of the gamma chain. F(1) is attached to F(0) by a central stalk formed by the gamma and epsilon chains, while a peripheral stalk is formed by the delta and b chains.

It is found in the cell inner membrane. In terms of biological role, f(1)F(0) ATP synthase produces ATP from ADP in the presence of a proton or sodium gradient. F-type ATPases consist of two structural domains, F(1) containing the extramembraneous catalytic core and F(0) containing the membrane proton channel, linked together by a central stalk and a peripheral stalk. During catalysis, ATP synthesis in the catalytic domain of F(1) is coupled via a rotary mechanism of the central stalk subunits to proton translocation. Functionally, this protein is part of the stalk that links CF(0) to CF(1). It either transmits conformational changes from CF(0) to CF(1) or is implicated in proton conduction. This is ATP synthase subunit delta from Alkalilimnicola ehrlichii (strain ATCC BAA-1101 / DSM 17681 / MLHE-1).